A 96-amino-acid polypeptide reads, in one-letter code: Large ribosomal subunit protein bL27 (96 aa).

The propeptide occupies 1-9; the sequence is MLRLDLQFF.

This sequence belongs to the bacterial ribosomal protein bL27 family. The N-terminus is cleaved by ribosomal processing cysteine protease Prp.

This is Large ribosomal subunit protein bL27 from Geobacillus sp. (strain WCH70).